A 107-amino-acid chain; its full sequence is Cytochrome c2 (107 aa).

Heme c-binding residues include Cys14, Cys17, His18, and Met80.

The protein belongs to the cytochrome c family. Binds 1 heme c group covalently per subunit.

Functionally, cytochrome c2 is found mainly in purple, non-sulfur, photosynthetic bacteria where it functions as the electron donor to the oxidized bacteriochlorophyll in the photophosphorylation pathway. However, it may also have a role in the respiratory chain and is found in some non-photosynthetic bacteria. This Rhodoblastus acidophilus (Rhodopseudomonas acidophila) protein is Cytochrome c2.